The chain runs to 1024 residues: Carbamoyl phosphate synthase large chain (1024 aa).

The interval M1–D396 is carboxyphosphate synthetic domain. ATP-binding residues include R125, R165, G171, G172, K204, L206, E211, G237, V238, H239, Q280, and E294. Residues Q129–L323 form the ATP-grasp 1 domain. Residues Q280, E294, and N296 each coordinate Mg(2+). Residues Q280, E294, and N296 each contribute to the Mn(2+) site. Positions I397–K536 are oligomerization domain. The carbamoyl phosphate synthetic domain stretch occupies residues K536–N917. The ATP-grasp 2 domain occupies S660–T849. ATP is bound by residues R696, K735, E742, G766, V767, H768, S769, Q809, and E820. The Mg(2+) site is built by Q809, E820, and N822. Q809, E820, and N822 together coordinate Mn(2+). An MGS-like domain is found at N917–W1024. The interval K918–W1024 is allosteric domain.

Belongs to the CarB family. Composed of two chains; the small (or glutamine) chain promotes the hydrolysis of glutamine to ammonia, which is used by the large (or ammonia) chain to synthesize carbamoyl phosphate. Tetramer of heterodimers (alpha,beta)4. Mg(2+) serves as cofactor. Mn(2+) is required as a cofactor.

The enzyme catalyses hydrogencarbonate + L-glutamine + 2 ATP + H2O = carbamoyl phosphate + L-glutamate + 2 ADP + phosphate + 2 H(+). It catalyses the reaction hydrogencarbonate + NH4(+) + 2 ATP = carbamoyl phosphate + 2 ADP + phosphate + 2 H(+). It functions in the pathway amino-acid biosynthesis; L-arginine biosynthesis; carbamoyl phosphate from bicarbonate: step 1/1. The protein operates within pyrimidine metabolism; UMP biosynthesis via de novo pathway; (S)-dihydroorotate from bicarbonate: step 1/3. Its function is as follows. Large subunit of the glutamine-dependent carbamoyl phosphate synthetase (CPSase). CPSase catalyzes the formation of carbamoyl phosphate from the ammonia moiety of glutamine, carbonate, and phosphate donated by ATP, constituting the first step of 2 biosynthetic pathways, one leading to arginine and/or urea and the other to pyrimidine nucleotides. The large subunit (synthetase) binds the substrates ammonia (free or transferred from glutamine from the small subunit), hydrogencarbonate and ATP and carries out an ATP-coupled ligase reaction, activating hydrogencarbonate by forming carboxy phosphate which reacts with ammonia to form carbamoyl phosphate. In Pyrobaculum aerophilum (strain ATCC 51768 / DSM 7523 / JCM 9630 / CIP 104966 / NBRC 100827 / IM2), this protein is Carbamoyl phosphate synthase large chain.